Consider the following 159-residue polypeptide: Putative 4-hydroxy-4-methyl-2-oxoglutarate aldolase (159 aa).

Residues 78–81 (GDVI) and Arg-100 each bind substrate. Residue Asp-101 participates in a divalent metal cation binding.

The protein belongs to the class II aldolase/RraA-like family. As to quaternary structure, homotrimer. A divalent metal cation is required as a cofactor.

It catalyses the reaction 4-hydroxy-4-methyl-2-oxoglutarate = 2 pyruvate. The enzyme catalyses oxaloacetate + H(+) = pyruvate + CO2. Its function is as follows. Catalyzes the aldol cleavage of 4-hydroxy-4-methyl-2-oxoglutarate (HMG) into 2 molecules of pyruvate. Also contains a secondary oxaloacetate (OAA) decarboxylase activity due to the common pyruvate enolate transition state formed following C-C bond cleavage in the retro-aldol and decarboxylation reactions. This is Putative 4-hydroxy-4-methyl-2-oxoglutarate aldolase from Mycobacterium sp. (strain JLS).